A 512-amino-acid chain; its full sequence is Glycine betaine transporter OpuD (512 aa).

Helical transmembrane passes span 5-25 (ISSV…WGVI), 45-65 (FGWY…FLIF), 82-102 (FGLL…GLVF), 135-155 (FFHW…CIAY), 186-206 (IDCI…GLGA), 222-242 (AFIV…LSAW), 257-277 (MVLA…VLIM), 312-332 (WTIF…IFIA), 343-363 (FLIG…SIFG), 395-415 (LTMV…ITSA), 441-461 (WGII…LAAL), and 464-484 (TAIL…ASLY).

The protein belongs to the BCCT transporter (TC 2.A.15) family.

The protein localises to the cell membrane. With respect to regulation, activity is stimulated by high osmolarity. High-affinity uptake of glycine betaine. Does not mediate either carnitine or choline uptake. The chain is Glycine betaine transporter OpuD (opuD) from Bacillus subtilis (strain 168).